The sequence spans 154 residues: Ubiquitin-like protein 4A-A (154 aa).

Positions 1 to 76 constitute a Ubiquitin-like domain; that stretch reads MILTVKPLQG…LNLVVRPAGE (76 aa).

Component of the BAT3 complex.

The protein resides in the cytoplasm. It localises to the cytosol. Component of the BAT3 complex, a multiprotein complex involved in the post-translational delivery of tail-anchored (TA) membrane proteins to the endoplasmic reticulum membrane. TA membrane proteins, also named type II transmembrane proteins, contain a single C-terminal transmembrane region. The protein is Ubiquitin-like protein 4A-A (ubl4aa) of Salmo salar (Atlantic salmon).